We begin with the raw amino-acid sequence, 649 residues long: tRNA-guanine(15) transglycosylase (649 aa).

Catalysis depends on Asp88, which acts as the Nucleophile. Substrate is bound by residues Asp123 and Ala194. Zn(2+)-binding residues include Cys280, Cys282, and Cys285. A PUA domain is found at 573–648 (KYRIVIDSSV…VAVTLRGGLK (76 aa)).

The protein belongs to the archaeosine tRNA-ribosyltransferase family. Zn(2+) serves as cofactor.

It catalyses the reaction guanosine(15) in tRNA + 7-cyano-7-deazaguanine = 7-cyano-7-carbaguanosine(15) in tRNA + guanine. The protein operates within tRNA modification; archaeosine-tRNA biosynthesis. Its function is as follows. Exchanges the guanine residue with 7-cyano-7-deazaguanine (preQ0) at position 15 in the dihydrouridine loop (D-loop) of archaeal tRNAs. This Methanococcus maripaludis (strain C7 / ATCC BAA-1331) protein is tRNA-guanine(15) transglycosylase.